A 725-amino-acid chain; its full sequence is Ribonuclease R (725 aa).

The region spanning 264–592 (RQDLTDLAFV…IHRLLWMHLF (329 aa)) is the RNB domain. The S1 motif domain occupies 644 to 725 (GKTFSGFISA…IQKRAILTLI (82 aa)).

It belongs to the RNR ribonuclease family. RNase R subfamily.

Its subcellular location is the cytoplasm. The catalysed reaction is Exonucleolytic cleavage in the 3'- to 5'-direction to yield nucleoside 5'-phosphates.. Its function is as follows. 3'-5' exoribonuclease that releases 5'-nucleoside monophosphates and is involved in maturation of structured RNAs. In Mycoplasma genitalium (strain ATCC 33530 / DSM 19775 / NCTC 10195 / G37) (Mycoplasmoides genitalium), this protein is Ribonuclease R.